A 490-amino-acid chain; its full sequence is ATP synthase subunit beta, plastid (490 aa).

Residue 170-177 (GGAGVGKT) participates in ATP binding.

The protein belongs to the ATPase alpha/beta chains family. As to quaternary structure, F-type ATPases have 2 components, CF(1) - the catalytic core - and CF(0) - the membrane proton channel. CF(1) has five subunits: alpha(3), beta(3), gamma(1), delta(1), epsilon(1). CF(0) has four main subunits: a(1), b(1), b'(1) and c(9-12).

The protein resides in the plastid thylakoid membrane. The catalysed reaction is ATP + H2O + 4 H(+)(in) = ADP + phosphate + 5 H(+)(out). Functionally, produces ATP from ADP in the presence of a proton gradient across the membrane. The catalytic sites are hosted primarily by the beta subunits. This is ATP synthase subunit beta, plastid from Cuscuta reflexa (Southern Asian dodder).